Reading from the N-terminus, the 160-residue chain is Cyclic pyranopterin monophosphate synthase (160 aa).

Residues 76–78 and 114–115 each bind substrate; these read LCH and ME. D129 is a catalytic residue.

The protein belongs to the MoaC family. In terms of assembly, homohexamer; trimer of dimers.

The enzyme catalyses (8S)-3',8-cyclo-7,8-dihydroguanosine 5'-triphosphate = cyclic pyranopterin phosphate + diphosphate. It participates in cofactor biosynthesis; molybdopterin biosynthesis. Catalyzes the conversion of (8S)-3',8-cyclo-7,8-dihydroguanosine 5'-triphosphate to cyclic pyranopterin monophosphate (cPMP). This is Cyclic pyranopterin monophosphate synthase from Mesorhizobium japonicum (strain LMG 29417 / CECT 9101 / MAFF 303099) (Mesorhizobium loti (strain MAFF 303099)).